The following is a 398-amino-acid chain: DJ-1 protein homolog E (398 aa).

2 consecutive PfpI endopeptidase domains span residues 7-199 (KSAL…ESLG) and 210-393 (ASVL…TALG).

It belongs to the peptidase C56 family. Homotrimer. In terms of tissue distribution, expressed in roots and cauline leaves.

Functionally, may be involved in oxidative stress response. The chain is DJ-1 protein homolog E (DJ1E) from Arabidopsis thaliana (Mouse-ear cress).